The chain runs to 292 residues: N-acetylneuraminate lyase (292 aa).

The aceneuramate site is built by serine 46 and threonine 47. Tyrosine 135 acts as the Proton donor in catalysis. Lysine 163 functions as the Schiff-base intermediate with substrate in the catalytic mechanism. Residues threonine 165, glycine 187, aspartate 189, glutamate 190, and serine 206 each contribute to the aceneuramate site.

It belongs to the DapA family. NanA subfamily. In terms of assembly, homotetramer.

Its subcellular location is the cytoplasm. It carries out the reaction aceneuramate = aldehydo-N-acetyl-D-mannosamine + pyruvate. It participates in amino-sugar metabolism; N-acetylneuraminate degradation; D-fructose 6-phosphate from N-acetylneuraminate: step 1/5. Catalyzes the reversible aldol cleavage of N-acetylneuraminic acid (sialic acid; Neu5Ac) to form pyruvate and N-acetylmannosamine (ManNAc) via a Schiff base intermediate. The chain is N-acetylneuraminate lyase from Lactiplantibacillus plantarum (strain ATCC BAA-793 / NCIMB 8826 / WCFS1) (Lactobacillus plantarum).